Here is a 95-residue protein sequence, read N- to C-terminus: CRISPR-associated endoribonuclease Cas2 3 (95 aa).

Aspartate 7 is a Mg(2+) binding site.

The protein belongs to the CRISPR-associated endoribonuclease Cas2 protein family. Homodimer, forms a heterotetramer with a Cas1 homodimer. Requires Mg(2+) as cofactor.

Its function is as follows. CRISPR (clustered regularly interspaced short palindromic repeat), is an adaptive immune system that provides protection against mobile genetic elements (viruses, transposable elements and conjugative plasmids). CRISPR clusters contain sequences complementary to antecedent mobile elements and target invading nucleic acids. CRISPR clusters are transcribed and processed into CRISPR RNA (crRNA). Functions as a ssRNA-specific endoribonuclease. Involved in the integration of spacer DNA into the CRISPR cassette. This chain is CRISPR-associated endoribonuclease Cas2 3, found in Rhodospirillum rubrum (strain ATCC 11170 / ATH 1.1.1 / DSM 467 / LMG 4362 / NCIMB 8255 / S1).